The chain runs to 250 residues: Biosynthetic peptidoglycan transglycosylase (250 aa).

The chain crosses the membrane as a helical span at residues 15–35 (AVLLFFVSSLGFVLLYRFVPV).

This sequence belongs to the glycosyltransferase 51 family.

It is found in the cell inner membrane. It carries out the reaction [GlcNAc-(1-&gt;4)-Mur2Ac(oyl-L-Ala-gamma-D-Glu-L-Lys-D-Ala-D-Ala)](n)-di-trans,octa-cis-undecaprenyl diphosphate + beta-D-GlcNAc-(1-&gt;4)-Mur2Ac(oyl-L-Ala-gamma-D-Glu-L-Lys-D-Ala-D-Ala)-di-trans,octa-cis-undecaprenyl diphosphate = [GlcNAc-(1-&gt;4)-Mur2Ac(oyl-L-Ala-gamma-D-Glu-L-Lys-D-Ala-D-Ala)](n+1)-di-trans,octa-cis-undecaprenyl diphosphate + di-trans,octa-cis-undecaprenyl diphosphate + H(+). Its pathway is cell wall biogenesis; peptidoglycan biosynthesis. In terms of biological role, peptidoglycan polymerase that catalyzes glycan chain elongation from lipid-linked precursors. This is Biosynthetic peptidoglycan transglycosylase from Bdellovibrio bacteriovorus (strain ATCC 15356 / DSM 50701 / NCIMB 9529 / HD100).